The chain runs to 340 residues: MIAECIKKVASHSDLSVYEAKGAMQDIMSGNATDGQIGAFLTALVMKGETSSEIAAFASVMRENAVQITPKRNGMLVDTCGTGGDGKNTFNISTAAAFTAAGAGVTVVKHGNRGATSKCGSADVLEALGIKIDISPERVCEIIDENGIGFMFAQSHHPAMKYAGKVRKEIGIRSFFNLIGPLSNPAGADAQLLGVYDSPLTEKIAEVLNILGTKRAMVVHGDGYDEITTTGITQVSEVNDGQVRSYSLDPSSFGFQKADAASLFGGDSQYNAHIIRSVLSGDEGPRRDIVILNAAAAIYLGERAGSIADGIKYAEKSIDSGLALEKLENLILLSGGKNDS.

Residues G81, 84–85, T89, 91–94, 109–117, and S121 contribute to the 5-phospho-alpha-D-ribose 1-diphosphate site; these read GD, NIST, and KHGNRGATS. Position 81 (G81) interacts with anthranilate. S93 is a binding site for Mg(2+). N112 contacts anthranilate. R167 contributes to the anthranilate binding site. Mg(2+) is bound by residues D225 and E226.

The protein belongs to the anthranilate phosphoribosyltransferase family. As to quaternary structure, homodimer. Requires Mg(2+) as cofactor.

It catalyses the reaction N-(5-phospho-beta-D-ribosyl)anthranilate + diphosphate = 5-phospho-alpha-D-ribose 1-diphosphate + anthranilate. Its pathway is amino-acid biosynthesis; L-tryptophan biosynthesis; L-tryptophan from chorismate: step 2/5. Functionally, catalyzes the transfer of the phosphoribosyl group of 5-phosphorylribose-1-pyrophosphate (PRPP) to anthranilate to yield N-(5'-phosphoribosyl)-anthranilate (PRA). This is Anthranilate phosphoribosyltransferase from Methanocorpusculum labreanum (strain ATCC 43576 / DSM 4855 / Z).